A 244-amino-acid chain; its full sequence is Acidic leucine-rich nuclear phosphoprotein 32 family member A (244 aa).

4 LRR repeats span residues 18–41, 43–64, 65–87, and 89–110; these read DVKE…TDEF, GLEF…PKLN, KLKK…AEKC, and NLTH…EPLK. Residues 123 to 161 enclose the LRRCT domain; it reads CEVTNLNDYRENLFKLLPQLTYLDGYDRDDKEAPDSDAE. The interval 148–244 is disordered; that stretch reads YDRDDKEAPD…DQDDEGEDDD (97 aa). The span at 157–227 shows a compositional bias: acidic residues; that stretch reads DSDAEGYVEG…EEDEGDEEAE (71 aa).

The protein belongs to the ANP32 family. Phosphorylated on serine residues.

The protein localises to the nucleus. The protein resides in the cytoplasm. Its subcellular location is the endoplasmic reticulum. Implicated in a number of cellular processes, including proliferation, differentiation, caspase-dependent and caspase-independent apoptosis, suppression of transformation (tumor suppressor), inhibition of protein phosphatase 2A, regulation of mRNA trafficking and stability, and inhibition of acetyltransferases as part of the INHAT (inhibitor of histone acetyltransferases) complex. This Xenopus laevis (African clawed frog) protein is Acidic leucine-rich nuclear phosphoprotein 32 family member A (anp32a).